The sequence spans 4007 residues: PKS-NRPS hybrid synthetase psoA (4007 aa).

Residues 8–444 (KEPIAIIGTG…GTNCHAIVES (437 aa)) enclose the Ketosynthase family 3 (KS3) domain. Active-site for beta-ketoacyl synthase activity residues include Cys182, His321, and His364. The tract at residues 575–897 (VFTGQGAQWA…VLDRKADDIL (323 aa)) is malonyl-CoA:ACP transacylase (MAT) domain. Positions 969–1105 (HPLLGSRTPD…GHIRITLAAE (137 aa)) are N-terminal hotdog fold. The dehydratase (DH) domain stretch occupies residues 969-1147 (HPLLGSRTPD…LSYSGPFRAM (179 aa)). Positions 969–1276 (HPLLGSRTPD…MSSFLPASEK (308 aa)) constitute a PKS/mFAS DH domain. The Proton acceptor; for dehydratase activity role is filled by His1001. A C-terminal hotdog fold region spans residues 1120-1276 (DLLPTSVDRF…MSSFLPASEK (157 aa)). The Proton donor; for dehydratase activity role is filled by Asp1179. The ketoreductase (KR) domain stretch occupies residues 2131–2305 (TYLLVGLTGH…PASVIDIGMV (175 aa)). In terms of domain architecture, Carrier 1 spans 2418-2495 (EARKVMENAL…QICDEVVASL (78 aa)). Ser2455 bears the O-(pantetheine 4'-phosphoryl)serine mark. Residues 2513 to 2550 (PAHKLRPWDKPSADTKRTDSIAPVPRSQIAANGPNGLP) are disordered. The span at 2518-2531 (RPWDKPSADTKRTD) shows a compositional bias: basic and acidic residues. The condensation (C) domain stretch occupies residues 2589 to 2885 (QPLSLGQSRL…LETIPLWFKV (297 aa)). An adenylation (A) domain region spans residues 3076 to 3478 (TYVQLAERAN…LGDVARALVQ (403 aa)). The 77-residue stretch at 3576 to 3652 (TPTEARLRDV…LLAARLDGTS (77 aa)) folds into the Carrier 2 domain. Position 3612 is an O-(pantetheine 4'-phosphoryl)serine (Ser3612). A reductase (R) domain region spans residues 3696 to 3920 (LTGATGFLGG…INVETVSNNI (225 aa)).

It in the C-terminal section; belongs to the NRP synthetase family.

Its pathway is secondary metabolite biosynthesis. PKS-NRPS hybrid synthetase; part of the gene cluster that mediates the biosynthesis of pseurotin A, a competitive inhibitor of chitin synthase and an inducer of nerve-cell proliferation. The PKS-NRPS hybrid synthetase psoA is responsible for the biosynthesis of azaspirene, one of the first intermediates having the 1-oxa-7-azaspiro[4,4]-non-2-ene-4,6-dione core of pseurotin, via condensation of one acetyl-CoA, 4 malonyl-CoA, and a L-phenylalanine molecule. The dual-functional monooxygenase/methyltransferase psoF seems to be involved in the addition of the C3 methyl group onto the pseurotin scaffold. Azaspirene is then converted to synerazol through 4 steps including oxidation of C17 by the cytochrome P450 monooxygenase psoD, O-methylation of the hydroxy group of C8 by the methyltransferase psoC, and the trans-to-cis isomerization of the C13 olefin by the glutathione S-transferase psoE. The fourth step of synerazol production is performed by the dual-functional monooxygenase/methyltransferase psoF which seems to catalyze the epoxidation of the intermediate deepoxy-synerazol. Synerazol can be attacked by a water molecule nonenzymatically at two different positions to yield two diol products, pseurotin A and pseurotin D. The sequence is that of PKS-NRPS hybrid synthetase psoA from Aspergillus fumigatus (strain ATCC MYA-4609 / CBS 101355 / FGSC A1100 / Af293) (Neosartorya fumigata).